A 130-amino-acid polypeptide reads, in one-letter code: Small ribosomal subunit protein uS11 (130 aa).

It belongs to the universal ribosomal protein uS11 family. In terms of assembly, part of the 30S ribosomal subunit. Interacts with proteins S7 and S18. Binds to IF-3.

Its function is as follows. Located on the platform of the 30S subunit, it bridges several disparate RNA helices of the 16S rRNA. Forms part of the Shine-Dalgarno cleft in the 70S ribosome. The polypeptide is Small ribosomal subunit protein uS11 (Prochlorococcus marinus (strain MIT 9515)).